The following is a 247-amino-acid chain: Ubiquinone biosynthesis O-methyltransferase (247 aa).

Residues Arg-41, Gly-72, Asp-93, and Met-136 each coordinate S-adenosyl-L-methionine.

It belongs to the methyltransferase superfamily. UbiG/COQ3 family.

The enzyme catalyses a 3-demethylubiquinol + S-adenosyl-L-methionine = a ubiquinol + S-adenosyl-L-homocysteine + H(+). It catalyses the reaction a 3-(all-trans-polyprenyl)benzene-1,2-diol + S-adenosyl-L-methionine = a 2-methoxy-6-(all-trans-polyprenyl)phenol + S-adenosyl-L-homocysteine + H(+). Its pathway is cofactor biosynthesis; ubiquinone biosynthesis. Functionally, O-methyltransferase that catalyzes the 2 O-methylation steps in the ubiquinone biosynthetic pathway. The protein is Ubiquinone biosynthesis O-methyltransferase of Bartonella quintana (strain Toulouse) (Rochalimaea quintana).